The following is a 345-amino-acid chain: Phosphoribosylformylglycinamidine cyclo-ligase (345 aa).

This sequence belongs to the AIR synthase family.

Its subcellular location is the cytoplasm. It catalyses the reaction 2-formamido-N(1)-(5-O-phospho-beta-D-ribosyl)acetamidine + ATP = 5-amino-1-(5-phospho-beta-D-ribosyl)imidazole + ADP + phosphate + H(+). It participates in purine metabolism; IMP biosynthesis via de novo pathway; 5-amino-1-(5-phospho-D-ribosyl)imidazole from N(2)-formyl-N(1)-(5-phospho-D-ribosyl)glycinamide: step 2/2. The polypeptide is Phosphoribosylformylglycinamidine cyclo-ligase (Shewanella sediminis (strain HAW-EB3)).